Reading from the N-terminus, the 451-residue chain is Probable DNA polymerase delta small subunit (451 aa).

The protein belongs to the DNA polymerase delta/II small subunit family. Heterodimer with subunits of 125 kDa and 50 kDa.

It localises to the nucleus. The enzyme catalyses DNA(n) + a 2'-deoxyribonucleoside 5'-triphosphate = DNA(n+1) + diphosphate. The function of the small subunit is not yet clear. The protein is Probable DNA polymerase delta small subunit of Caenorhabditis elegans.